Reading from the N-terminus, the 367-residue chain is Undecaprenyl-phosphate alpha-N-acetylglucosaminyl 1-phosphate transferase (367 aa).

Transmembrane regions (helical) follow at residues 3-23 (LLTVSTDLISIFLFTTLFLFF), 46-66 (LIPLVGGISVYAGICFTFGIV), 69-89 (YIPHASLYLACAGVLVFIGAL), 132-152 (VLGPFGYFLTLFAVWAAINAF), 158-178 (IDGLLGGLSCVSFAAIGMILW), 187-207 (IWCFAMIAAILPYIMLNLGIL), 213-233 (VFMGDAGSTLIGFTVIWILLE), 242-262 (ISPVTALWIIAIPLMDMVAIM), 294-314 (AFVLITLAAALLASIGVLAEY), and 318-338 (VPEWVMLVLFLLAFLLYGYCI).

This sequence belongs to the glycosyltransferase 4 family. WecA subfamily. Requires Mg(2+) as cofactor. It depends on Mn(2+) as a cofactor.

It localises to the cell inner membrane. It carries out the reaction di-trans,octa-cis-undecaprenyl phosphate + UDP-N-acetyl-alpha-D-glucosamine = N-acetyl-alpha-D-glucosaminyl-di-trans,octa-cis-undecaprenyl diphosphate + UMP. It participates in bacterial outer membrane biogenesis; LPS O-antigen biosynthesis. The protein operates within bacterial outer membrane biogenesis; enterobacterial common antigen biosynthesis. Functionally, catalyzes the transfer of the GlcNAc-1-phosphate moiety from UDP-GlcNAc onto the carrier lipid undecaprenyl phosphate (C55-P), yielding GlcNAc-pyrophosphoryl-undecaprenyl (GlcNAc-PP-C55). This chain is Undecaprenyl-phosphate alpha-N-acetylglucosaminyl 1-phosphate transferase, found in Escherichia coli O157:H7.